The following is a 459-amino-acid chain: Argininosuccinate lyase (459 aa).

This sequence belongs to the lyase 1 family. Argininosuccinate lyase subfamily.

It is found in the cytoplasm. It catalyses the reaction 2-(N(omega)-L-arginino)succinate = fumarate + L-arginine. It participates in amino-acid biosynthesis; L-arginine biosynthesis; L-arginine from L-ornithine and carbamoyl phosphate: step 3/3. This is Argininosuccinate lyase from Photorhabdus laumondii subsp. laumondii (strain DSM 15139 / CIP 105565 / TT01) (Photorhabdus luminescens subsp. laumondii).